We begin with the raw amino-acid sequence, 197 residues long: Phosphoheptose isomerase (197 aa).

The 161-residue stretch at 37-197 (MLQCLMNDGK…CIDSVLLEGM (161 aa)) folds into the SIS domain. Residue 52–54 (NGG) participates in substrate binding. Residues histidine 61 and glutamate 65 each coordinate Zn(2+). Substrate is bound by residues glutamate 65, 94–95 (ND), 120–122 (STS), serine 125, and glutamine 175. Residues glutamine 175 and histidine 183 each coordinate Zn(2+).

It belongs to the SIS family. GmhA subfamily. Homotetramer. Zn(2+) is required as a cofactor.

It is found in the cytoplasm. It catalyses the reaction 2 D-sedoheptulose 7-phosphate = D-glycero-alpha-D-manno-heptose 7-phosphate + D-glycero-beta-D-manno-heptose 7-phosphate. It participates in carbohydrate biosynthesis; D-glycero-D-manno-heptose 7-phosphate biosynthesis; D-glycero-alpha-D-manno-heptose 7-phosphate and D-glycero-beta-D-manno-heptose 7-phosphate from sedoheptulose 7-phosphate: step 1/1. In terms of biological role, catalyzes the isomerization of sedoheptulose 7-phosphate in D-glycero-D-manno-heptose 7-phosphate. The protein is Phosphoheptose isomerase of Neisseria gonorrhoeae (strain ATCC 700825 / FA 1090).